The sequence spans 451 residues: Ribonuclease J (451 aa).

Residues His-84, His-86, Asp-88, His-89, His-155, and Asp-177 each contribute to the Zn(2+) site. 384–388 (HVSGH) lines the substrate pocket. Residue His-410 participates in Zn(2+) binding.

Belongs to the metallo-beta-lactamase superfamily. RNA-metabolizing metallo-beta-lactamase-like family. Archaeal RNase J subfamily. As to quaternary structure, homodimer. The cofactor is Zn(2+).

The protein localises to the cytoplasm. With respect to regulation, inhibited by 1,10-phenanthroline. Its function is as follows. A highly processive 5'-3' exoribonuclease; no evidence has been seen for endonuclease activity. Prefers 5'-phosphate or 5'-hydroxyl ends; 5'-triphosphate substrates are very poorly degraded, does not degrade circular RNA. Does not degrade pre-tRNA(Trp) suggesting it is inhibited by strong secondary structures. Also degrades ssNDA but not dsDNA. The protein is Ribonuclease J of Pyrococcus abyssi (strain GE5 / Orsay).